Reading from the N-terminus, the 880-residue chain is Valine--tRNA ligase (880 aa).

Residues P49–H59 carry the 'HIGH' region motif. Positions K525–S529 match the 'KMSKS' region motif. K528 is an ATP binding site. Residues L809 to R880 adopt a coiled-coil conformation.

Belongs to the class-I aminoacyl-tRNA synthetase family. ValS type 1 subfamily. As to quaternary structure, monomer.

It localises to the cytoplasm. The catalysed reaction is tRNA(Val) + L-valine + ATP = L-valyl-tRNA(Val) + AMP + diphosphate. Catalyzes the attachment of valine to tRNA(Val). As ValRS can inadvertently accommodate and process structurally similar amino acids such as threonine, to avoid such errors, it has a 'posttransfer' editing activity that hydrolyzes mischarged Thr-tRNA(Val) in a tRNA-dependent manner. The sequence is that of Valine--tRNA ligase from Geobacillus kaustophilus (strain HTA426).